A 139-amino-acid polypeptide reads, in one-letter code: Peptide methionine sulfoxide reductase MsrB (139 aa).

The MsrB domain maps to 9–131; sequence TPSDNTELTE…NSASLSFIDD (123 aa). Cys-48, Cys-51, Cys-97, and Cys-100 together coordinate Zn(2+). The Nucleophile role is filled by Cys-120.

It belongs to the MsrB Met sulfoxide reductase family. Zn(2+) serves as cofactor.

It carries out the reaction L-methionyl-[protein] + [thioredoxin]-disulfide + H2O = L-methionyl-(R)-S-oxide-[protein] + [thioredoxin]-dithiol. In Pectobacterium carotovorum subsp. carotovorum (strain PC1), this protein is Peptide methionine sulfoxide reductase MsrB.